Here is an 81-residue protein sequence, read N- to C-terminus: DNA-directed RNA polymerase subunit Rpo6 (81 aa).

Belongs to the archaeal Rpo6/eukaryotic RPB6 RNA polymerase subunit family. As to quaternary structure, part of the RNA polymerase complex.

It is found in the cytoplasm. It carries out the reaction RNA(n) + a ribonucleoside 5'-triphosphate = RNA(n+1) + diphosphate. Functionally, DNA-dependent RNA polymerase (RNAP) catalyzes the transcription of DNA into RNA using the four ribonucleoside triphosphates as substrates. This Thermofilum pendens (strain DSM 2475 / Hrk 5) protein is DNA-directed RNA polymerase subunit Rpo6.